Here is a 78-residue protein sequence, read N- to C-terminus: Protein SlyX homolog (78 aa).

This sequence belongs to the SlyX family.

The chain is Protein SlyX homolog from Xanthomonas euvesicatoria pv. vesicatoria (strain 85-10) (Xanthomonas campestris pv. vesicatoria).